The chain runs to 489 residues: CBL-interacting serine/threonine-protein kinase 12 (489 aa).

Residues 26–280 (YEMGKLLGHG…FPEIMENSWF (255 aa)) enclose the Protein kinase domain. ATP contacts are provided by residues 32–40 (LGHGTFAKV) and Lys-55. Asp-148 acts as the Proton acceptor in catalysis. The activation loop stretch occupies residues 166–195 (DFGLSAVSDQIRQDGLFHTFCGTPAYVAPE). Ser-170 is subject to Phosphoserine. Thr-184 carries the post-translational modification Phosphothreonine. The region spanning 336–360 (PRPASLNAFDIISFSQGFDLSGLFD) is the NAF domain. Residues 363–392 (GEGSRFVSGAPVSKIISKLEEIAKVVSFTV) are PPI.

It belongs to the protein kinase superfamily. CAMK Ser/Thr protein kinase family. SNF1 subfamily. As to quaternary structure, interacts with CBL2 and CBL3. It depends on Mn(2+) as a cofactor. As to expression, expressed in roots and shoots.

It catalyses the reaction L-seryl-[protein] + ATP = O-phospho-L-seryl-[protein] + ADP + H(+). It carries out the reaction L-threonyl-[protein] + ATP = O-phospho-L-threonyl-[protein] + ADP + H(+). Its function is as follows. CIPK serine-threonine protein kinases interact with CBL proteins. Binding of a CBL protein to the regulatory NAF domain of CIPK protein lead to the activation of the kinase in a calcium-dependent manner. The protein is CBL-interacting serine/threonine-protein kinase 12 (CIPK12) of Arabidopsis thaliana (Mouse-ear cress).